We begin with the raw amino-acid sequence, 341 residues long: 33 kDa chaperonin (341 aa).

Disulfide bonds link Cys-245–Cys-247 and Cys-278–Cys-281.

This sequence belongs to the HSP33 family. In terms of processing, under oxidizing conditions two disulfide bonds are formed involving the reactive cysteines. Under reducing conditions zinc is bound to the reactive cysteines and the protein is inactive.

It localises to the cytoplasm. Its function is as follows. Redox regulated molecular chaperone. Protects both thermally unfolding and oxidatively damaged proteins from irreversible aggregation. Plays an important role in the bacterial defense system toward oxidative stress. The protein is 33 kDa chaperonin of Thermus thermophilus (strain ATCC BAA-163 / DSM 7039 / HB27).